An 829-amino-acid chain; its full sequence is Probable beta-glucosidase H (829 aa).

N-linked (GlcNAc...) asparagine glycosylation occurs at N13. Residue D225 is part of the active site. N-linked (GlcNAc...) asparagine glycans are attached at residues N304, N473, N602, N627, N664, and N749. One can recognise a PA14 domain in the interval 389–548 (RMLSNAVIHF…DPEQMVANAV (160 aa)).

Belongs to the glycosyl hydrolase 3 family.

Its subcellular location is the secreted. The catalysed reaction is Hydrolysis of terminal, non-reducing beta-D-glucosyl residues with release of beta-D-glucose.. Its pathway is glycan metabolism; cellulose degradation. Beta-glucosidases are one of a number of cellulolytic enzymes involved in the degradation of cellulosic biomass. Catalyzes the last step releasing glucose from the inhibitory cellobiose. This chain is Probable beta-glucosidase H (bglH), found in Aspergillus fumigatus (strain CBS 144.89 / FGSC A1163 / CEA10) (Neosartorya fumigata).